The primary structure comprises 154 residues: uncharacterized protein (154 aa).

S47 bears the Phosphoserine mark.

It to yeast YPL229w.

This is an uncharacterized protein from Saccharomyces cerevisiae (strain ATCC 204508 / S288c) (Baker's yeast).